Reading from the N-terminus, the 323-residue chain is uncharacterized protein (323 aa).

2 disordered regions span residues 185–214 (AELMKSEDSPEKDEETLRREERKQKEGSSW) and 271–294 (GNIISQKDNPPKSDSDDEDDYEKL).

Belongs to the IGBP1/TAP42 family.

This is an uncharacterized protein from Schizosaccharomyces pombe (strain 972 / ATCC 24843) (Fission yeast).